The sequence spans 513 residues: Probable hydrolase YhcX (513 aa).

Residues 14-212 (MVIRNIEEKD…YATLMEWNNV (199 aa)) enclose the N-acetyltransferase domain. The 256-residue stretch at 229–484 (VRICVIQYEM…EMVVIGDVDL (256 aa)) folds into the CN hydrolase domain. The active-site Proton acceptor is the Glu270. The active-site Proton donor is Lys345. Catalysis depends on Cys379, which acts as the Nucleophile.

The protein belongs to the carbon-nitrogen hydrolase superfamily. NIT1/NIT2 family.

The protein is Probable hydrolase YhcX (yhcX) of Bacillus subtilis (strain 168).